The chain runs to 359 residues: 4-hydroxy-3-methylbut-2-en-1-yl diphosphate synthase (flavodoxin) (359 aa).

Cysteine 265, cysteine 268, cysteine 300, and glutamate 307 together coordinate [4Fe-4S] cluster.

The protein belongs to the IspG family. It depends on [4Fe-4S] cluster as a cofactor.

It catalyses the reaction (2E)-4-hydroxy-3-methylbut-2-enyl diphosphate + oxidized [flavodoxin] + H2O + 2 H(+) = 2-C-methyl-D-erythritol 2,4-cyclic diphosphate + reduced [flavodoxin]. The protein operates within isoprenoid biosynthesis; isopentenyl diphosphate biosynthesis via DXP pathway; isopentenyl diphosphate from 1-deoxy-D-xylulose 5-phosphate: step 5/6. Converts 2C-methyl-D-erythritol 2,4-cyclodiphosphate (ME-2,4cPP) into 1-hydroxy-2-methyl-2-(E)-butenyl 4-diphosphate. This is 4-hydroxy-3-methylbut-2-en-1-yl diphosphate synthase (flavodoxin) from Lawsonia intracellularis (strain PHE/MN1-00).